The chain runs to 480 residues: Ribulose bisphosphate carboxylase large chain (480 aa).

The propeptide occupies 1 to 2 (MS). Proline 3 carries the post-translational modification N-acetylproline. At lysine 14 the chain carries N6,N6,N6-trimethyllysine. Residues asparagine 123 and threonine 173 each contribute to the substrate site. The active-site Proton acceptor is lysine 175. Lysine 177 serves as a coordination point for substrate. Residues lysine 201, aspartate 203, and glutamate 204 each coordinate Mg(2+). Position 201 is an N6-carboxylysine (lysine 201). The active-site Proton acceptor is the histidine 294. 3 residues coordinate substrate: arginine 295, histidine 327, and serine 379.

This sequence belongs to the RuBisCO large chain family. Type I subfamily. In terms of assembly, heterohexadecamer of 8 large chains and 8 small chains; disulfide-linked. The disulfide link is formed within the large subunit homodimers. The cofactor is Mg(2+). Post-translationally, the disulfide bond which can form in the large chain dimeric partners within the hexadecamer appears to be associated with oxidative stress and protein turnover.

It localises to the plastid. The protein resides in the chloroplast. It catalyses the reaction 2 (2R)-3-phosphoglycerate + 2 H(+) = D-ribulose 1,5-bisphosphate + CO2 + H2O. The catalysed reaction is D-ribulose 1,5-bisphosphate + O2 = 2-phosphoglycolate + (2R)-3-phosphoglycerate + 2 H(+). In terms of biological role, ruBisCO catalyzes two reactions: the carboxylation of D-ribulose 1,5-bisphosphate, the primary event in carbon dioxide fixation, as well as the oxidative fragmentation of the pentose substrate in the photorespiration process. Both reactions occur simultaneously and in competition at the same active site. The chain is Ribulose bisphosphate carboxylase large chain from Rivina humilis (Rougeplant).